The sequence spans 157 residues: Ribosome maturation factor RimP (157 aa).

It belongs to the RimP family.

It is found in the cytoplasm. Required for maturation of 30S ribosomal subunits. The chain is Ribosome maturation factor RimP from Ligilactobacillus salivarius (strain UCC118) (Lactobacillus salivarius).